Consider the following 303-residue polypeptide: Mesenteric estrogen-dependent adipogenesis protein (303 aa).

Highly expressed in the visceral fat depot.

The protein resides in the cytoplasm. Its function is as follows. Involved in processes that promote adipocyte differentiation, lipid accumulation, and glucose uptake in mature adipocytes. The chain is Mesenteric estrogen-dependent adipogenesis protein (MEDAG) from Homo sapiens (Human).